Here is a 504-residue protein sequence, read N- to C-terminus: Cytochrome P450 3A2 (504 aa).

Cys-443 is a binding site for heme.

It belongs to the cytochrome P450 family. Heme serves as cofactor. As to expression, expressed in liver.

The protein localises to the endoplasmic reticulum membrane. It is found in the microsome membrane. The enzyme catalyses an organic molecule + reduced [NADPH--hemoprotein reductase] + O2 = an alcohol + oxidized [NADPH--hemoprotein reductase] + H2O + H(+). In terms of biological role, cytochromes P450 are a group of heme-thiolate monooxygenases. In liver microsomes, this enzyme is involved in an NADPH-dependent electron transport pathway. It oxidizes a variety of structurally unrelated compounds, including steroids, fatty acids, and xenobiotics. The polypeptide is Cytochrome P450 3A2 (Cyp3a2) (Rattus norvegicus (Rat)).